The primary structure comprises 201 residues: Recombination protein RecR (201 aa).

The C4-type zinc-finger motif lies at 60–75 (CSRCGNVDTVDPCTVC). The region spanning 83–178 (SVIIVVEDVS…KITRLAHGVP (96 aa)) is the Toprim domain.

Belongs to the RecR family.

In terms of biological role, may play a role in DNA repair. It seems to be involved in an RecBC-independent recombinational process of DNA repair. It may act with RecF and RecO. This is Recombination protein RecR from Rhizobium etli (strain CIAT 652).